The primary structure comprises 328 residues: Pancreas transcription factor 1 subunit alpha (328 aa).

The bHLH domain occupies 163–215; it reads QLRQAANVRERRRMQSINDAFEGLRSHIPTLPYEKRLSKVDTLRLAIGYINFL. 2 disordered regions span residues 259–278 and 305–328; these read RGTR…PLAG and DPRK…EFVS.

As to quaternary structure, component of the pancreas transcription factor 1 complex (PTF1) which is composed of TCF3/p75, TCF12/p64 and PTF1A/p48. TCF3 is responsible for the nuclear import of the p48/p64 complex. Interacts with TCF3 and RBPSUH/RBP-Jkappa. As to expression, pancreas-specific (at protein level). Loss of expression is seen in ductal type pancreas cancers.

It is found in the nucleus. Its subcellular location is the cytoplasm. Its function is as follows. Transcription factor implicated in the cell fate determination in various organs. Binds to the E-box consensus sequence 5'-CANNTG-3'. Plays a role in early and late pancreas development and differentiation. Important for determining whether cells allocated to the pancreatic buds continue towards pancreatic organogenesis or revert back to duodenal fates. May be involved in the maintenance of exocrine pancreas-specific gene expression including ELA1 and amylase. Required for the formation of pancreatic acinar and ductal cells. Plays an important role in cerebellar development. Directly regulated by FOXN4 and RORC during retinal development, FOXN4-PTF1A pathway plays a central role in directing the differentiation of retinal progenitors towards horizontal and amacrine fates. The sequence is that of Pancreas transcription factor 1 subunit alpha (PTF1A) from Homo sapiens (Human).